A 163-amino-acid chain; its full sequence is Ribonuclease P protein subunit p25-like protein (163 aa).

2 disordered regions span residues 1–22 (MEHY…PQLP) and 129–163 (NECG…DTRS). The segment covering 143-152 (GSMPSSSCGP) has biased composition (low complexity). The segment covering 153 to 163 (RSRRRARDTRS) has biased composition (basic residues).

This sequence belongs to the histone-like Alba family.

It is found in the nucleus. Its function is as follows. May be a component of ribonuclease P or MRP. In Homo sapiens (Human), this protein is Ribonuclease P protein subunit p25-like protein (RPP25L).